Here is a 268-residue protein sequence, read N- to C-terminus: MKNIILQYKKKYDAGEPISVVTCYDYTFATLFNRTDVDCLLVGDSLGMVIQGNQSTLPVTLDEIIYHTKAVCKGAPDKTIIADLPFLSYQTSIEEGIRSAGRVLKETNASCVKLEGDSEFIIELTKRMTESGIPVFAHLGLTPQSVHTLGGHRVQGKTEAARNKMIRKSRELAEAGAFALLLEMVPESLGKEITESIRIPTIGIGAGKYTSGQVLVMQDLLGLNEDFHPKFLKKFGNLSGAVKEAVNAYHKEVTKREYPSEAHVFLDT.

The Mg(2+) site is built by D44 and D83. Residues 44 to 45, D83, and K113 each bind 3-methyl-2-oxobutanoate; that span reads DS. Residue E115 participates in Mg(2+) binding. The active-site Proton acceptor is E183.

The protein belongs to the PanB family. Homodecamer; pentamer of dimers. The cofactor is Mg(2+).

The protein resides in the cytoplasm. It catalyses the reaction 3-methyl-2-oxobutanoate + (6R)-5,10-methylene-5,6,7,8-tetrahydrofolate + H2O = 2-dehydropantoate + (6S)-5,6,7,8-tetrahydrofolate. Its pathway is cofactor biosynthesis; (R)-pantothenate biosynthesis; (R)-pantoate from 3-methyl-2-oxobutanoate: step 1/2. Catalyzes the reversible reaction in which hydroxymethyl group from 5,10-methylenetetrahydrofolate is transferred onto alpha-ketoisovalerate to form ketopantoate. The polypeptide is 3-methyl-2-oxobutanoate hydroxymethyltransferase (Leptospira biflexa serovar Patoc (strain Patoc 1 / Ames)).